The chain runs to 332 residues: 2,3-diketo-L-gulonate reductase (332 aa).

His-44 functions as the Proton donor in the catalytic mechanism. NAD(+) contacts are provided by residues 168–174 (ITMVDMS), 224–225 (WK), and 304–306 (GHE).

Belongs to the LDH2/MDH2 oxidoreductase family. DlgD subfamily. Homodimer.

It localises to the cytoplasm. It carries out the reaction 3-dehydro-L-gulonate + NAD(+) = 2,3-dioxo-L-gulonate + NADH + H(+). It catalyses the reaction 3-dehydro-L-gulonate + NADP(+) = 2,3-dioxo-L-gulonate + NADPH + H(+). In terms of biological role, catalyzes the reduction of 2,3-diketo-L-gulonate in the presence of NADH, to form 3-keto-L-gulonate. This chain is 2,3-diketo-L-gulonate reductase, found in Salmonella paratyphi B (strain ATCC BAA-1250 / SPB7).